Here is a 555-residue protein sequence, read N- to C-terminus: mRNA cleavage and polyadenylation factor CLP1 (555 aa).

Residues E30, K69, and 156-161 contribute to the ATP site; that span reads YLGKTS. Positions 431–451 are disordered; it reads DDFEHITNEDENGGDGNDGDG.

This sequence belongs to the Clp1 family. Clp1 subfamily. Component of a pre-mRNA cleavage factor complex. Interacts directly with PCF11.

It localises to the nucleus. Functionally, required for endonucleolytic cleavage during polyadenylation-dependent pre-mRNA 3'-end formation. The protein is mRNA cleavage and polyadenylation factor CLP1 of Lodderomyces elongisporus (strain ATCC 11503 / CBS 2605 / JCM 1781 / NBRC 1676 / NRRL YB-4239) (Yeast).